A 460-amino-acid polypeptide reads, in one-letter code: Chromosomal replication initiator protein DnaA (460 aa).

The tract at residues 1–84 is domain I, interacts with DnaA modulators; sequence MAVSLWQQCI…RFDIGSRPSA (84 aa). A domain II region spans residues 84-123; sequence AKKPEPAPVAAVRVPSPQTKASVGTAFNTTEPVANTNHRS. The domain III, AAA+ region stretch occupies residues 124–340; the sequence is NINPTYQFDN…GALNRVIANA (217 aa). ATP-binding residues include G168, G170, K171, and T172. The domain IV, binds dsDNA stretch occupies residues 341–460; it reads NFTGRPITID…YANLIRTLSS (120 aa).

It belongs to the DnaA family. Oligomerizes as a right-handed, spiral filament on DNA at oriC.

The protein resides in the cytoplasm. Its function is as follows. Plays an essential role in the initiation and regulation of chromosomal replication. ATP-DnaA binds to the origin of replication (oriC) to initiate formation of the DNA replication initiation complex once per cell cycle. Binds the DnaA box (a 9 base pair repeat at the origin) and separates the double-stranded (ds)DNA. Forms a right-handed helical filament on oriC DNA; dsDNA binds to the exterior of the filament while single-stranded (ss)DNA is stabiized in the filament's interior. The ATP-DnaA-oriC complex binds and stabilizes one strand of the AT-rich DNA unwinding element (DUE), permitting loading of DNA polymerase. After initiation quickly degrades to an ADP-DnaA complex that is not apt for DNA replication. Binds acidic phospholipids. This is Chromosomal replication initiator protein DnaA from Shewanella oneidensis (strain ATCC 700550 / JCM 31522 / CIP 106686 / LMG 19005 / NCIMB 14063 / MR-1).